We begin with the raw amino-acid sequence, 552 residues long: Formate--tetrahydrofolate ligase (552 aa).

Residue 63-70 coordinates ATP; it reads TPFGEGKT.

Belongs to the formate--tetrahydrofolate ligase family.

The catalysed reaction is (6S)-5,6,7,8-tetrahydrofolate + formate + ATP = (6R)-10-formyltetrahydrofolate + ADP + phosphate. It functions in the pathway one-carbon metabolism; tetrahydrofolate interconversion. This chain is Formate--tetrahydrofolate ligase, found in Caldicellulosiruptor bescii (strain ATCC BAA-1888 / DSM 6725 / KCTC 15123 / Z-1320) (Anaerocellum thermophilum).